The sequence spans 296 residues: Cytidine deaminase (296 aa).

CMP/dCMP-type deaminase domains are found at residues 47–167 (AESE…FGPS) and 186–296 (DSSD…LDPE). A substrate-binding site is contributed by 88 to 90 (NME). Residue His-101 coordinates Zn(2+). Residue Glu-103 is the Proton donor of the active site. Positions 128 and 131 each coordinate Zn(2+).

Belongs to the cytidine and deoxycytidylate deaminase family. As to quaternary structure, homodimer. The cofactor is Zn(2+).

It carries out the reaction cytidine + H2O + H(+) = uridine + NH4(+). It catalyses the reaction 2'-deoxycytidine + H2O + H(+) = 2'-deoxyuridine + NH4(+). Functionally, this enzyme scavenges exogenous and endogenous cytidine and 2'-deoxycytidine for UMP synthesis. This Shewanella sediminis (strain HAW-EB3) protein is Cytidine deaminase.